The following is an 88-amino-acid chain: MSDARNNRKVYRGRVVSDKMDKTITVVVETTKTDARYGKRVKYSKKYKAHDENGEAHTGDIVEIMETRPLSATKRFRLVDIVEKAVII.

Belongs to the universal ribosomal protein uS17 family. In terms of assembly, part of the 30S ribosomal subunit.

In terms of biological role, one of the primary rRNA binding proteins, it binds specifically to the 5'-end of 16S ribosomal RNA. The sequence is that of Small ribosomal subunit protein uS17 from Levilactobacillus brevis (strain ATCC 367 / BCRC 12310 / CIP 105137 / JCM 1170 / LMG 11437 / NCIMB 947 / NCTC 947) (Lactobacillus brevis).